Here is a 438-residue protein sequence, read N- to C-terminus: Leupeptin-inactivating enzyme 1 (438 aa).

The first 37 residues, 1 to 37 (MSLSVSRRLAAVTAFAVAGLFASAVPAALAAPSAVAA), serve as a signal peptide directing secretion. Residues His-125 and Asp-137 each contribute to the Zn(2+) site. Catalysis depends on Glu-171, which acts as the Proton acceptor. Positions 172, 200, and 287 each coordinate Zn(2+). A disulfide bond links Cys-285 and Cys-290. The 118-residue stretch at 321-438 (VPPGQSFENT…GYINSWKITF (118 aa)) folds into the P/Homo B domain.

It belongs to the peptidase M28 family. M28A subfamily. As to quaternary structure, monomer. The cofactor is Zn(2+).

The protein localises to the secreted. Activity is inhibited by metalloprotease inhibitors and activated by Mg(2+) and Ca(2+). A leucine-specific metalloprotease that plays a role in controlling the amount of leupeptin during colony development. Degrades leupeptin into three components, acetyl-leucine, leucine and argininal. Has a strict preference for leucine at the P1 site. The protein is Leupeptin-inactivating enzyme 1 (lieA) of Streptomyces exfoliatus (Streptomyces hydrogenans).